We begin with the raw amino-acid sequence, 690 residues long: MLLLPRCPVIGRIVRSKFRSGLIRNHSPVIFTVSKLSTQRPLLFNSAVNLWNQAQKDITHKKSVEQFSSAPKVKTQVKKTSKAPTLSELKILKDLFRYIWPKGNNKVRIRVLIALGLLISAKILNVQVPFFFKQTIDSMNIAWDDPTVALPAAIGLTILCYGVARFGSVLFGELRNAVFAKVAQNAIRTVSLQTFQHLMKLDLGWHLSRQTGGLTRAMDRGTKGISQVLTAMVFHIIPISFEISVVCGILTYQFGASFAAITFSTMLLYSIFTIKTTAWRTHFRRDANKADNKAASVALDSLINFEAVKYFNNEKYLADKYNGSLMNYRDSQIKVSQSLAFLNSGQNLIFTTALTAMMYMGCTGVIGGNLTVGDLVLINQLVFQLSVPLNFLGSVYRDLKQSLIDMETLFKLRKNEVKIKNAERPLMLPENVPYDITFENVTFGYHPDRKILKNASFTIPAGWKTAIVGSSGSGKSTILKLVFRFYDPESGRILINGRDIKEYDIDALRKVIGVVPQDTPLFNDTIWENVKFGRIDATDEEVITVVEKAQLAPLIKKLPQGFDTIVGERGLMISGGEKQRLAIARVLLKNARIMFFDEATSALDTHTEQALLRTIRDNFTSGSRTSVYIAHRLRTIADADKIIVLDNGRVREEGKHLELLAMPGSLYRELWTIQEDLDHLENELKDQQEL.

A mitochondrion-targeting transit peptide spans 1-26 (MLLLPRCPVIGRIVRSKFRSGLIRNH). The Mitochondrial matrix portion of the chain corresponds to 27–110 (SPVIFTVSKL…PKGNNKVRIR (84 aa)). The chain crosses the membrane as a helical span at residues 111 to 132 (VLIALGLLISAKILNVQVPFFF). The ABC transmembrane type-1 domain maps to 111–401 (VLIALGLLIS…LGSVYRDLKQ (291 aa)). Over 133–155 (KQTIDSMNIAWDDPTVALPAAIG) the chain is Mitochondrial intermembrane. Residues 156-179 (LTILCYGVARFGSVLFGELRNAVF) traverse the membrane as a helical segment. Residues 180 to 228 (AKVAQNAIRTVSLQTFQHLMKLDLGWHLSRQTGGLTRAMDRGTKGISQV) are Mitochondrial matrix-facing. The chain crosses the membrane as a helical span at residues 229-252 (LTAMVFHIIPISFEISVVCGILTY). Position 253 (Gln-253) is a topological domain, mitochondrial intermembrane. A helical transmembrane segment spans residues 254–274 (FGASFAAITFSTMLLYSIFTI). The Mitochondrial matrix segment spans residues 275 to 340 (KTTAWRTHFR…SQIKVSQSLA (66 aa)). Residues 280-284 (RTHFR) and 343-346 (NSGQ) each bind glutathione. The helical transmembrane segment at 341-359 (FLNSGQNLIFTTALTAMMY) threads the bilayer. At 360 to 374 (MGCTGVIGGNLTVGD) the chain is on the mitochondrial intermembrane side. The chain crosses the membrane as a helical span at residues 375–396 (LVLINQLVFQLSVPLNFLGSVY). Residue Gly-393 participates in glutathione binding. At 397 to 690 (RDLKQSLIDM…ENELKDQQEL (294 aa)) the chain is on the mitochondrial matrix side. The 237-residue stretch at 436–672 (ITFENVTFGY…PGSLYRELWT (237 aa)) folds into the ABC transporter domain. Residues Tyr-445 and 469-480 (GSSGSGKSTILK) contribute to the ATP site.

This sequence belongs to the ABC transporter superfamily. ABCB family. Heavy Metal importer (TC 3.A.1.210) subfamily. As to quaternary structure, homodimer.

The protein resides in the mitochondrion inner membrane. Functionally, performs an essential function in the generation of cytoplasmic iron-sulfur proteins by mediating the ATP-dependent export of Fe/S cluster precursors synthesized by NFS1 and other mitochondrial proteins. Hydrolyzes ATP. Binds glutathione and may function by transporting a glutathione-conjugated iron-sulfur compound. This Saccharomyces cerevisiae (strain ATCC 204508 / S288c) (Baker's yeast) protein is Iron-sulfur clusters transporter ATM1, mitochondrial.